Reading from the N-terminus, the 902-residue chain is Protein translocase subunit SecA (902 aa).

ATP-binding positions include Gln-85, 103-107 (GEGKT), and Asp-492. The segment at 846 to 902 (LSYSGGGEEPNQRPKSPRRRSERKIGPNEPCPCGSGKKFKKCHGRVGAPPLPTSQSQ) is disordered. Residues Cys-876, Cys-878, Cys-887, and His-888 each contribute to the Zn(2+) site.

It belongs to the SecA family. In terms of assembly, monomer and homodimer. Part of the essential Sec protein translocation apparatus which comprises SecA, SecYEG and auxiliary proteins SecDF. Other proteins may also be involved. Zn(2+) serves as cofactor.

The protein localises to the cell membrane. It is found in the cytoplasm. The enzyme catalyses ATP + H2O + cellular proteinSide 1 = ADP + phosphate + cellular proteinSide 2.. In terms of biological role, part of the Sec protein translocase complex. Interacts with the SecYEG preprotein conducting channel. Has a central role in coupling the hydrolysis of ATP to the transfer of proteins into and across the cell membrane, serving as an ATP-driven molecular motor driving the stepwise translocation of polypeptide chains across the membrane. The polypeptide is Protein translocase subunit SecA (Rubrobacter xylanophilus (strain DSM 9941 / JCM 11954 / NBRC 16129 / PRD-1)).